The sequence spans 360 residues: Cysteine proteinase 2 (360 aa).

The N-terminal stretch at 1-19 (MVPRRLFVLAVVVLADTAA) is a signal peptide. Positions 20–142 (VVNSGFADSN…NHRMRAAAVA (123 aa)) are cleaved as a propeptide — activation peptide. Asparagine 125 is a glycosylation site (N-linked (GlcNAc...) asparagine). 2 cysteine pairs are disulfide-bonded: cysteine 164–cysteine 207 and cysteine 198–cysteine 240. The active site involves cysteine 167. The N-linked (GlcNAc...) asparagine glycan is linked to asparagine 256. Cysteine 298 and cysteine 348 form a disulfide bridge. Residues histidine 307 and asparagine 327 contribute to the active site.

The protein belongs to the peptidase C1 family. As to expression, expressed at the onset of germination.

Its subcellular location is the vacuole. Involved in the degradation of the storage protein zein. May play a role in proteolysis during emergencies. The chain is Cysteine proteinase 2 (CCP2) from Zea mays (Maize).